A 259-amino-acid polypeptide reads, in one-letter code: MMISGLRSSFSFFTLVPSRQKDIGNPITFLPLVVTVGALIGDSILYITWQFSHLIASFLSISSIIIYNGLNHFDATADLGDALMVRDKSRIPEVIKDHHVGAGGIFAVIFVYGIAVLSLARSTLYIGLVGILIGQVVSGSSMMISLIGSQPFVPGLADYFISLFRKHSVGYTIEFLAIPIIVSFIFSPLYVVIVALNLLIVQLTKTMISRRFGGINGDVIGFLGEFSRSLFIFMLIIIAHYNVASTYDIFSKMLSSFTS.

6 helical membrane-spanning segments follow: residues 27 to 47, 51 to 71, 100 to 120, 124 to 144, 175 to 195, and 219 to 239; these read ITFLPLVVTVGALIGDSILYI, FSHLIASFLSISSIIIYNGLN, VGAGGIFAVIFVYGIAVLSLA, LYIGLVGILIGQVVSGSSMMI, FLAIPIIVSFIFSPLYVVIVA, and VIGFLGEFSRSLFIFMLIIIA.

The protein belongs to the CobS family. Mg(2+) is required as a cofactor.

It is found in the cell membrane. It carries out the reaction alpha-ribazole + adenosylcob(III)inamide-GDP = adenosylcob(III)alamin + GMP + H(+). It catalyses the reaction alpha-ribazole 5'-phosphate + adenosylcob(III)inamide-GDP = adenosylcob(III)alamin 5'-phosphate + GMP + H(+). The protein operates within cofactor biosynthesis; adenosylcobalamin biosynthesis; adenosylcobalamin from cob(II)yrinate a,c-diamide: step 7/7. In terms of biological role, joins adenosylcobinamide-GDP and alpha-ribazole to generate adenosylcobalamin (Ado-cobalamin). Also synthesizes adenosylcobalamin 5'-phosphate from adenosylcobinamide-GDP and alpha-ribazole 5'-phosphate. This chain is Adenosylcobinamide-GDP ribazoletransferase, found in Thermoplasma volcanium (strain ATCC 51530 / DSM 4299 / JCM 9571 / NBRC 15438 / GSS1).